A 143-amino-acid polypeptide reads, in one-letter code: UPF0260 protein plu2141 (143 aa).

This sequence belongs to the UPF0260 family.

This chain is UPF0260 protein plu2141, found in Photorhabdus laumondii subsp. laumondii (strain DSM 15139 / CIP 105565 / TT01) (Photorhabdus luminescens subsp. laumondii).